The primary structure comprises 481 residues: Cardiolipin synthase A (481 aa).

Helical transmembrane passes span 10-30 and 40-60; these read FFGY…LHAL and IAWA…YLIF. 2 PLD phosphodiesterase domains span residues 220–247 and 394–421; these read VNFR…GDEY and QPGF…DNRS. Residues H225, K227, D232, H399, K401, and D406 contribute to the active site.

Belongs to the phospholipase D family. Cardiolipin synthase subfamily. ClsA sub-subfamily.

It localises to the cell inner membrane. The enzyme catalyses 2 a 1,2-diacyl-sn-glycero-3-phospho-(1'-sn-glycerol) = a cardiolipin + glycerol. In terms of biological role, catalyzes the reversible phosphatidyl group transfer from one phosphatidylglycerol molecule to another to form cardiolipin (CL) (diphosphatidylglycerol) and glycerol. This Pseudomonas putida (strain ATCC 47054 / DSM 6125 / CFBP 8728 / NCIMB 11950 / KT2440) protein is Cardiolipin synthase A.